A 500-amino-acid chain; its full sequence is MRGELWLLVLVLREAARALSPQPGAGHDEGPGSGWAAKGTVRGWNRRARESPGHVSEPDRTQLSQDLGGGTLAMDTLPDNRTRVVEDNHSYYVSRLYGPSEPHSRELWVDVAEANRSQVKIHTILSNTHRQASRVVLSFDFPFYGHPLRQITIATGGFIFMGDVIHRMLTATQYVAPLMANFNPGYSDNSTVVYFDNGTVFVVQWDHVYLQGWEDKGSFTFQAALHHDGRIVFAYKEIPMSVPEISSSQHPVKTGLSDAFMILNPSPDVPESRRRSIFEYHRIELDPSKVTSMSAVEFTPLPTCLQHRSCDACMSSDLTFNCSWCHVLQRCSSGFDRYRQEWMDYGCAQEAEGRMCEDFQDEDHDSASPDTSFSPYDGDLTTTSSSLFIDSLTTEDDTKLNPYAGGDGLQNNLSPKTKGTPVHLGTIVGIVLAVLLVAAIILAGIYINGHPTSNAALFFIERRPHHWPAMKFRSHPDHSTYAEVEPSGHEKEGFMEAEQC.

A signal peptide spans 1 to 18; the sequence is MRGELWLLVLVLREAARA. Topologically, residues 19–426 are extracellular; it reads LSPQPGAGHD…TKGTPVHLGT (408 aa). Disordered stretches follow at residues 20-39 and 46-78; these read SPQP…AAKG and RRAR…DTLP. The O-linked (Xyl...) (chondroitin sulfate) serine glycan is linked to Ser33. A compositionally biased stretch (basic and acidic residues) spans 47 to 60; that stretch reads RARESPGHVSEPDR. N-linked (GlcNAc...) asparagine glycans are attached at residues Asn80 and Asn197. A disordered region spans residues 359-379; it reads FQDEDHDSASPDTSFSPYDGD. Residues 368-379 are compositionally biased toward polar residues; the sequence is SPDTSFSPYDGD. Residues 427–447 form a helical membrane-spanning segment; that stretch reads IVGIVLAVLLVAAIILAGIYI. The Cytoplasmic portion of the chain corresponds to 448–500; it reads NGHPTSNAALFFIERRPHHWPAMKFRSHPDHSTYAEVEPSGHEKEGFMEAEQC. Residues 479–494 show a composition bias toward basic and acidic residues; that stretch reads STYAEVEPSGHEKEGF. Residues 479-500 form a disordered region; the sequence is STYAEVEPSGHEKEGFMEAEQC.

The protein belongs to the plexin family. As to quaternary structure, interacts with NID1. May interact with CTTN. N-glycosylated. In terms of tissue distribution, detected in urine (at protein level). Detected in endothelial cells from colorectal cancer, and in endothelial cells from primary cancers of the lung, liver, pancreas, breast and brain. Not detectable in endothelial cells from normal tissue. Expressed in fibrovascular membrane with increased expression in individuals with proliferative diabetic retinopathy.

It localises to the secreted. It is found in the cell membrane. The protein localises to the cell junction. Its subcellular location is the tight junction. The protein resides in the cytoplasm. Plays a critical role in endothelial cell capillary morphogenesis. The chain is Plexin domain-containing protein 1 (PLXDC1) from Homo sapiens (Human).